Reading from the N-terminus, the 233-residue chain is Large ribosomal subunit protein uL1 (233 aa).

It belongs to the universal ribosomal protein uL1 family. As to quaternary structure, part of the 50S ribosomal subunit.

Functionally, binds directly to 23S rRNA. The L1 stalk is quite mobile in the ribosome, and is involved in E site tRNA release. Protein L1 is also a translational repressor protein, it controls the translation of the L11 operon by binding to its mRNA. The chain is Large ribosomal subunit protein uL1 from Thermotoga petrophila (strain ATCC BAA-488 / DSM 13995 / JCM 10881 / RKU-1).